The following is a 170-amino-acid chain: Adenine phosphoribosyltransferase (170 aa).

Belongs to the purine/pyrimidine phosphoribosyltransferase family. Homodimer.

The protein localises to the cytoplasm. The catalysed reaction is AMP + diphosphate = 5-phospho-alpha-D-ribose 1-diphosphate + adenine. It participates in purine metabolism; AMP biosynthesis via salvage pathway; AMP from adenine: step 1/1. Catalyzes a salvage reaction resulting in the formation of AMP, that is energically less costly than de novo synthesis. The chain is Adenine phosphoribosyltransferase from Enterococcus faecalis (strain ATCC 700802 / V583).